Reading from the N-terminus, the 1004-residue chain is 2-oxoglutarate dehydrogenase E1 component (1004 aa).

This sequence belongs to the alpha-ketoglutarate dehydrogenase family. In terms of assembly, homodimer. Part of the 2-oxoglutarate dehydrogenase (OGDH) complex composed of E1 (2-oxoglutarate dehydrogenase), E2 (dihydrolipoamide succinyltransferase) and E3 (dihydrolipoamide dehydrogenase); the complex contains multiple copies of the three enzymatic components (E1, E2 and E3). Requires thiamine diphosphate as cofactor.

It carries out the reaction N(6)-[(R)-lipoyl]-L-lysyl-[protein] + 2-oxoglutarate + H(+) = N(6)-[(R)-S(8)-succinyldihydrolipoyl]-L-lysyl-[protein] + CO2. E1 component of the 2-oxoglutarate dehydrogenase (OGDH) complex which catalyzes the decarboxylation of 2-oxoglutarate, the first step in the conversion of 2-oxoglutarate to succinyl-CoA and CO(2). This Brucella canis (strain ATCC 23365 / NCTC 10854 / RM-666) protein is 2-oxoglutarate dehydrogenase E1 component.